A 243-amino-acid chain; its full sequence is Ubiquinone/menaquinone biosynthesis C-methyltransferase UbiE (243 aa).

S-adenosyl-L-methionine-binding positions include Thr-69, Asp-90, and Asp-116–Ala-117.

It belongs to the class I-like SAM-binding methyltransferase superfamily. MenG/UbiE family.

It catalyses the reaction a 2-demethylmenaquinol + S-adenosyl-L-methionine = a menaquinol + S-adenosyl-L-homocysteine + H(+). The enzyme catalyses a 2-methoxy-6-(all-trans-polyprenyl)benzene-1,4-diol + S-adenosyl-L-methionine = a 5-methoxy-2-methyl-3-(all-trans-polyprenyl)benzene-1,4-diol + S-adenosyl-L-homocysteine + H(+). It participates in quinol/quinone metabolism; menaquinone biosynthesis; menaquinol from 1,4-dihydroxy-2-naphthoate: step 2/2. Its pathway is cofactor biosynthesis; ubiquinone biosynthesis. Its function is as follows. Methyltransferase required for the conversion of demethylmenaquinol (DMKH2) to menaquinol (MKH2) and the conversion of 2-polyprenyl-6-methoxy-1,4-benzoquinol (DDMQH2) to 2-polyprenyl-3-methyl-6-methoxy-1,4-benzoquinol (DMQH2). The protein is Ubiquinone/menaquinone biosynthesis C-methyltransferase UbiE of Burkholderia mallei (strain NCTC 10247).